The sequence spans 335 residues: Teichoic acids export ATP-binding protein TagH (335 aa).

An ABC transporter domain is found at 26-246 (IKGLFMPKSQ…YDEFVKWFNK (221 aa)). 60-67 (GINGSGKS) is a binding site for ATP.

This sequence belongs to the ABC transporter superfamily. Teichoic acids exporter (TC 3.A.1.104.1) family. In terms of assembly, the complex is composed of two ATP-binding proteins (TagH) and two transmembrane proteins (TagG).

Its subcellular location is the cell membrane. The enzyme catalyses ATP + H2O + teichoic acidSide 1 = ADP + phosphate + teichoic acidSide 2.. Its function is as follows. Part of the ABC transporter complex TagGH involved in teichoic acids export. Responsible for energy coupling to the transport system. This Listeria innocua serovar 6a (strain ATCC BAA-680 / CLIP 11262) protein is Teichoic acids export ATP-binding protein TagH.